A 223-amino-acid chain; its full sequence is Endonuclease V (223 aa).

Mg(2+)-binding residues include aspartate 35 and aspartate 103.

This sequence belongs to the endonuclease V family. Mg(2+) is required as a cofactor.

The protein localises to the cytoplasm. The catalysed reaction is Endonucleolytic cleavage at apurinic or apyrimidinic sites to products with a 5'-phosphate.. In terms of biological role, DNA repair enzyme involved in the repair of deaminated bases. Selectively cleaves double-stranded DNA at the second phosphodiester bond 3' to a deoxyinosine leaving behind the intact lesion on the nicked DNA. This Cronobacter sakazakii (strain ATCC BAA-894) (Enterobacter sakazakii) protein is Endonuclease V.